Reading from the N-terminus, the 270-residue chain is Putative pyruvate, phosphate dikinase regulatory protein (270 aa).

150 to 157 (GPSRTSKS) contacts ADP.

It belongs to the pyruvate, phosphate/water dikinase regulatory protein family. PDRP subfamily.

It catalyses the reaction N(tele)-phospho-L-histidyl/L-threonyl-[pyruvate, phosphate dikinase] + ADP = N(tele)-phospho-L-histidyl/O-phospho-L-threonyl-[pyruvate, phosphate dikinase] + AMP + H(+). The enzyme catalyses N(tele)-phospho-L-histidyl/O-phospho-L-threonyl-[pyruvate, phosphate dikinase] + phosphate + H(+) = N(tele)-phospho-L-histidyl/L-threonyl-[pyruvate, phosphate dikinase] + diphosphate. Functionally, bifunctional serine/threonine kinase and phosphorylase involved in the regulation of the pyruvate, phosphate dikinase (PPDK) by catalyzing its phosphorylation/dephosphorylation. The polypeptide is Putative pyruvate, phosphate dikinase regulatory protein (Neorickettsia sennetsu (strain ATCC VR-367 / Miyayama) (Ehrlichia sennetsu)).